A 281-amino-acid chain; its full sequence is NADPH-dependent 7-cyano-7-deazaguanine reductase (281 aa).

Substrate is bound at residue 88–90 (IES). 90–91 (SK) contributes to the NADPH binding site. The Thioimide intermediate role is filled by Cys189. Asp196 functions as the Proton donor in the catalytic mechanism. Position 228-229 (228-229 (HE)) interacts with substrate. Residue 257-258 (RG) participates in NADPH binding.

This sequence belongs to the GTP cyclohydrolase I family. QueF type 2 subfamily. As to quaternary structure, homodimer.

It is found in the cytoplasm. It catalyses the reaction 7-aminomethyl-7-carbaguanine + 2 NADP(+) = 7-cyano-7-deazaguanine + 2 NADPH + 3 H(+). The protein operates within tRNA modification; tRNA-queuosine biosynthesis. In terms of biological role, catalyzes the NADPH-dependent reduction of 7-cyano-7-deazaguanine (preQ0) to 7-aminomethyl-7-deazaguanine (preQ1). The polypeptide is NADPH-dependent 7-cyano-7-deazaguanine reductase (Yersinia pestis bv. Antiqua (strain Antiqua)).